Here is a 311-residue protein sequence, read N- to C-terminus: 4-diphosphocytidyl-2-C-methyl-D-erythritol kinase (311 aa).

Lys-16 is an active-site residue. An ATP-binding site is contributed by 100 to 110 (PIGAGLAGGSS). Asp-142 is an active-site residue.

Belongs to the GHMP kinase family. IspE subfamily.

The catalysed reaction is 4-CDP-2-C-methyl-D-erythritol + ATP = 4-CDP-2-C-methyl-D-erythritol 2-phosphate + ADP + H(+). It participates in isoprenoid biosynthesis; isopentenyl diphosphate biosynthesis via DXP pathway; isopentenyl diphosphate from 1-deoxy-D-xylulose 5-phosphate: step 3/6. In terms of biological role, catalyzes the phosphorylation of the position 2 hydroxy group of 4-diphosphocytidyl-2C-methyl-D-erythritol. The protein is 4-diphosphocytidyl-2-C-methyl-D-erythritol kinase of Prochlorococcus marinus (strain AS9601).